Consider the following 410-residue polypeptide: Ribosomal protein S6 kinase-related protein (410 aa).

The 168-residue stretch at 107-274 (LKILGLVAKG…GTLQYMAPEV (168 aa)) folds into the Protein kinase domain. Residues 113 to 121 (VAKGSFGTV) and K136 each bind ATP. D229 functions as the Proton acceptor in the catalytic mechanism.

The protein belongs to the protein kinase superfamily. Ser/Thr protein kinase family.

The catalysed reaction is L-seryl-[protein] + ATP = O-phospho-L-seryl-[protein] + ADP + H(+). The enzyme catalyses L-threonyl-[protein] + ATP = O-phospho-L-threonyl-[protein] + ADP + H(+). This Homo sapiens (Human) protein is Ribosomal protein S6 kinase-related protein.